We begin with the raw amino-acid sequence, 285 residues long: Cell division protein ZipA (285 aa).

Position 1 (M1) is a topological domain, periplasmic. The helical transmembrane segment at 2–22 (EIGLREWLIVIGIVVIGGILF) threads the bilayer. The Cytoplasmic portion of the chain corresponds to 23-285 (DGWRRMRGSK…FERRQLTHKR (263 aa)). Residues 49 to 88 (AVSENSELLGPSRSVDFPQGAGFEPDEENLPSLSVRGPSR) form a disordered region.

It belongs to the ZipA family. As to quaternary structure, interacts with FtsZ via their C-terminal domains.

The protein resides in the cell inner membrane. Essential cell division protein that stabilizes the FtsZ protofilaments by cross-linking them and that serves as a cytoplasmic membrane anchor for the Z ring. Also required for the recruitment to the septal ring of downstream cell division proteins. The sequence is that of Cell division protein ZipA from Azotobacter vinelandii (strain DJ / ATCC BAA-1303).